The following is a 375-amino-acid chain: uncharacterized protein (375 aa).

Belongs to the IMPDH/GMPR family.

This is an uncharacterized protein from Mycobacterium tuberculosis (strain CDC 1551 / Oshkosh).